We begin with the raw amino-acid sequence, 193 residues long: Peptidyl-tRNA hydrolase (193 aa).

Tyr-18 provides a ligand contact to tRNA. His-23 acts as the Proton acceptor in catalysis. Residues Phe-69, Asn-71, and Asn-117 each coordinate tRNA.

The protein belongs to the PTH family. Monomer.

The protein resides in the cytoplasm. The enzyme catalyses an N-acyl-L-alpha-aminoacyl-tRNA + H2O = an N-acyl-L-amino acid + a tRNA + H(+). Hydrolyzes ribosome-free peptidyl-tRNAs (with 1 or more amino acids incorporated), which drop off the ribosome during protein synthesis, or as a result of ribosome stalling. Functionally, catalyzes the release of premature peptidyl moieties from peptidyl-tRNA molecules trapped in stalled 50S ribosomal subunits, and thus maintains levels of free tRNAs and 50S ribosomes. This is Peptidyl-tRNA hydrolase from Teredinibacter turnerae (strain ATCC 39867 / T7901).